Consider the following 558-residue polypeptide: Tyrosine N-monooxygenase (558 aa).

Residues Val-13–Thr-33 traverse the membrane as a helical segment. The interval Thr-48 to Pro-67 is disordered. The segment covering Thr-49–Asn-65 has biased composition (low complexity). 5 residues coordinate heme b: Arg-138, Arg-167, His-422, Arg-491, and Cys-493.

This sequence belongs to the cytochrome P450 family. Heme b is required as a cofactor.

It localises to the endoplasmic reticulum membrane. The catalysed reaction is L-tyrosine + 2 reduced [NADPH--hemoprotein reductase] + 2 O2 = (E)-4-hydroxyphenylacetaldehyde oxime + 2 oxidized [NADPH--hemoprotein reductase] + CO2 + 3 H2O + 2 H(+). It carries out the reaction L-tyrosine + reduced [NADPH--hemoprotein reductase] + O2 = N-hydroxy-L-tyrosine + oxidized [NADPH--hemoprotein reductase] + H2O + 2 H(+). It catalyses the reaction N-hydroxy-L-tyrosine + reduced [NADPH--hemoprotein reductase] + O2 = N,N-dihydroxy-L-tyrosine + oxidized [NADPH--hemoprotein reductase] + H2O + H(+). The enzyme catalyses N,N-dihydroxy-L-tyrosine + H(+) = (E)-4-hydroxyphenylacetaldehyde oxime + CO2 + H2O. It participates in secondary metabolite biosynthesis; dhurrin biosynthesis; dhurrin from L-tyrosine: step 1/3. In terms of biological role, cytochrome P450 involved in the biosynthesis of the cyanogenic glucoside dhurrin. Catalyzes the conversion of L-tyrosine to p-hydroxyphenylacetaldehyde oxime, via the N-hydroxy-L-tyrosine and N,N-dihydroxy-L-tyrosine intermediates. Produces the (E) isomer of the final oxime product. This chain is Tyrosine N-monooxygenase (CYP79A1), found in Sorghum bicolor (Sorghum).